Here is a 68-residue protein sequence, read N- to C-terminus: DNA-directed RNA polymerase subunit omega (68 aa).

Belongs to the RNA polymerase subunit omega family. As to quaternary structure, the RNAP catalytic core consists of 2 alpha, 1 beta, 1 beta' and 1 omega subunit. When a sigma factor is associated with the core the holoenzyme is formed, which can initiate transcription.

It catalyses the reaction RNA(n) + a ribonucleoside 5'-triphosphate = RNA(n+1) + diphosphate. Functionally, promotes RNA polymerase assembly. Latches the N- and C-terminal regions of the beta' subunit thereby facilitating its interaction with the beta and alpha subunits. This chain is DNA-directed RNA polymerase subunit omega, found in Trichlorobacter lovleyi (strain ATCC BAA-1151 / DSM 17278 / SZ) (Geobacter lovleyi).